Here is a 320-residue protein sequence, read N- to C-terminus: Ribose-phosphate pyrophosphokinase (320 aa).

41 to 43 (NDN) contributes to the ATP binding site. Residues histidine 134 and aspartate 175 each coordinate Mg(2+). The active site involves lysine 198. 2 residues coordinate D-ribose 5-phosphate: arginine 200 and aspartate 224.

The protein belongs to the ribose-phosphate pyrophosphokinase family. Class I subfamily. Homohexamer. Requires Mg(2+) as cofactor.

It localises to the cytoplasm. It carries out the reaction D-ribose 5-phosphate + ATP = 5-phospho-alpha-D-ribose 1-diphosphate + AMP + H(+). It functions in the pathway metabolic intermediate biosynthesis; 5-phospho-alpha-D-ribose 1-diphosphate biosynthesis; 5-phospho-alpha-D-ribose 1-diphosphate from D-ribose 5-phosphate (route I): step 1/1. Its function is as follows. Involved in the biosynthesis of the central metabolite phospho-alpha-D-ribosyl-1-pyrophosphate (PRPP) via the transfer of pyrophosphoryl group from ATP to 1-hydroxyl of ribose-5-phosphate (Rib-5-P). The sequence is that of Ribose-phosphate pyrophosphokinase from Deinococcus radiodurans (strain ATCC 13939 / DSM 20539 / JCM 16871 / CCUG 27074 / LMG 4051 / NBRC 15346 / NCIMB 9279 / VKM B-1422 / R1).